Here is a 183-residue protein sequence, read N- to C-terminus: Pyruvoyl-dependent arginine decarboxylase (183 aa).

Ser-44 bears the Pyruvic acid (Ser) mark.

This sequence belongs to the PdaD family. Pyruvate serves as cofactor.

It catalyses the reaction L-arginine + H(+) = agmatine + CO2. The sequence is that of Pyruvoyl-dependent arginine decarboxylase from Nitrosopumilus maritimus (strain SCM1).